We begin with the raw amino-acid sequence, 404 residues long: Cysteine desulfurase IscS (404 aa).

Pyridoxal 5'-phosphate-binding positions include 75-76 (AT), Asn-155, Gln-183, and 203-205 (SGH). The residue at position 206 (Lys-206) is an N6-(pyridoxal phosphate)lysine. Residue Thr-243 coordinates pyridoxal 5'-phosphate. Cys-328 serves as the catalytic Cysteine persulfide intermediate. Cys-328 is a binding site for [2Fe-2S] cluster.

This sequence belongs to the class-V pyridoxal-phosphate-dependent aminotransferase family. NifS/IscS subfamily. In terms of assembly, homodimer. Forms a heterotetramer with IscU, interacts with other sulfur acceptors. Pyridoxal 5'-phosphate serves as cofactor.

The protein resides in the cytoplasm. The enzyme catalyses (sulfur carrier)-H + L-cysteine = (sulfur carrier)-SH + L-alanine. Its pathway is cofactor biosynthesis; iron-sulfur cluster biosynthesis. In terms of biological role, master enzyme that delivers sulfur to a number of partners involved in Fe-S cluster assembly, tRNA modification or cofactor biosynthesis. Catalyzes the removal of elemental sulfur atoms from cysteine to produce alanine. Functions as a sulfur delivery protein for Fe-S cluster synthesis onto IscU, an Fe-S scaffold assembly protein, as well as other S acceptor proteins. The polypeptide is Cysteine desulfurase IscS (Mannheimia succiniciproducens (strain KCTC 0769BP / MBEL55E)).